The following is a 260-amino-acid chain: Thiazole synthase (260 aa).

The active-site Schiff-base intermediate with DXP is Lys96. 1-deoxy-D-xylulose 5-phosphate contacts are provided by residues Gly157, 184-185 (AG), and 206-207 (NT).

It belongs to the ThiG family. In terms of assembly, homotetramer. Forms heterodimers with either ThiH or ThiS.

The protein localises to the cytoplasm. It carries out the reaction [ThiS sulfur-carrier protein]-C-terminal-Gly-aminoethanethioate + 2-iminoacetate + 1-deoxy-D-xylulose 5-phosphate = [ThiS sulfur-carrier protein]-C-terminal Gly-Gly + 2-[(2R,5Z)-2-carboxy-4-methylthiazol-5(2H)-ylidene]ethyl phosphate + 2 H2O + H(+). The protein operates within cofactor biosynthesis; thiamine diphosphate biosynthesis. Functionally, catalyzes the rearrangement of 1-deoxy-D-xylulose 5-phosphate (DXP) to produce the thiazole phosphate moiety of thiamine. Sulfur is provided by the thiocarboxylate moiety of the carrier protein ThiS. In vitro, sulfur can be provided by H(2)S. This chain is Thiazole synthase, found in Bradyrhizobium diazoefficiens (strain JCM 10833 / BCRC 13528 / IAM 13628 / NBRC 14792 / USDA 110).